The chain runs to 123 residues: U9-barytoxin-Tl1a (123 aa).

The N-terminal stretch at 1–18 (MNTMITFLVLFVLTAANG) is a signal peptide. The propeptide occupies 19 to 77 (APEANERKIPEAIHNEDQSLAEMAEELMFFLQQTEFEAPLLQEEEEAEXAEXRNSRERR). Cystine bridges form between Cys78/Cys93, Cys85/Cys98, and Cys92/Cys112.

It belongs to the neurotoxin 14 (magi-1) family. 05 (ICK-7) subfamily. ICK-7 sub-subfamily. As to expression, expressed by the venom gland.

It is found in the secreted. Its function is as follows. Ion channel inhibitor. This is U9-barytoxin-Tl1a from Trittame loki (Brush-footed trapdoor spider).